Here is a 274-residue protein sequence, read N- to C-terminus: Diaminopimelate epimerase (274 aa).

The substrate site is built by Asn11, Gln44, and Asn64. Cys73 acts as the Proton donor in catalysis. Residues 74–75 (GN), Asn157, Asn190, and 208–209 (ER) each bind substrate. Cys217 serves as the catalytic Proton acceptor. Residue 218–219 (GS) coordinates substrate.

It belongs to the diaminopimelate epimerase family. As to quaternary structure, homodimer.

It is found in the cytoplasm. The enzyme catalyses (2S,6S)-2,6-diaminopimelate = meso-2,6-diaminopimelate. It participates in amino-acid biosynthesis; L-lysine biosynthesis via DAP pathway; DL-2,6-diaminopimelate from LL-2,6-diaminopimelate: step 1/1. Its function is as follows. Catalyzes the stereoinversion of LL-2,6-diaminopimelate (L,L-DAP) to meso-diaminopimelate (meso-DAP), a precursor of L-lysine and an essential component of the bacterial peptidoglycan. The protein is Diaminopimelate epimerase of Pasteurella multocida (strain Pm70).